Consider the following 66-residue polypeptide: Large ribosomal subunit protein bL33c (66 aa).

Belongs to the bacterial ribosomal protein bL33 family.

It is found in the plastid. It localises to the chloroplast. This Oenothera argillicola (Appalachian evening primrose) protein is Large ribosomal subunit protein bL33c.